Here is a 104-residue protein sequence, read N- to C-terminus: Vesicle-associated membrane protein 3 (104 aa).

The segment at M1–Q23 is disordered. Residues M1–K81 are Cytoplasmic-facing. Over residues A7–S16 the composition is skewed to low complexity. One can recognise a v-SNARE coiled-coil homology domain in the interval R18–K78. Residues K70, K72, and K81 each participate in a glycyl lysine isopeptide (Lys-Gly) (interchain with G-Cter in ubiquitin) cross-link. The helical; Anchor for type IV membrane protein transmembrane segment at M82–I102 threads the bilayer. The Vesicular portion of the chain corresponds to S103–S104.

Belongs to the synaptobrevin family. Interacts with POPDC1 (via the C-terminus cytoplasmic tail). Interacts with BCAP31; involved in VAMP3 export from the endoplasmic reticulum. Interacts with BAIAP3; this interaction is increased in the presence of calcium. Interacts with PICALM. Ubiquitinated by RNF167 at Lys-70, Lys-72 and Lys-81, regulating the recycling endosome pathway.

It is found in the early endosome membrane. Its subcellular location is the recycling endosome membrane. The protein localises to the synapse. The protein resides in the synaptosome. Its function is as follows. SNARE involved in vesicular transport from the late endosomes to the trans-Golgi network. This is Vesicle-associated membrane protein 3 (VAMP3) from Bos taurus (Bovine).